The chain runs to 504 residues: GTPase Der (504 aa).

The 165-residue stretch at 4 to 168 folds into the EngA-type G 1 domain; sequence PVVALVGRPN…QVLAPFAEKM (165 aa). GTP contacts are provided by residues 10–17, 57–61, and 120–123; these read GRPNVGKS, DTGGI, and NKTD. Over residues 168–179 the composition is skewed to basic and acidic residues; sequence MENADENDRTSE. The tract at residues 168–191 is disordered; the sequence is MENADENDRTSEEEQDEWEQEFDF. A compositionally biased stretch (acidic residues) spans 180-191; the sequence is EEQDEWEQEFDF. The region spanning 216-389 is the EngA-type G 2 domain; that stretch reads IKIAIVGRPN…SIKEAYACAT (174 aa). Residues 222-229, 269-273, and 334-337 contribute to the GTP site; these read GRPNVGKS, DTAGV, and NKWD. Residues 390 to 474 form the KH-like domain; that stretch reads QKMTTSLLTR…PIRLLFQEGS (85 aa).

Belongs to the TRAFAC class TrmE-Era-EngA-EngB-Septin-like GTPase superfamily. EngA (Der) GTPase family. In terms of assembly, associates with the 50S ribosomal subunit.

GTPase that plays an essential role in the late steps of ribosome biogenesis. The protein is GTPase Der of Haemophilus influenzae (strain ATCC 51907 / DSM 11121 / KW20 / Rd).